A 315-amino-acid polypeptide reads, in one-letter code: Methionyl-tRNA formyltransferase (315 aa).

Ser113–Pro116 contributes to the (6S)-5,6,7,8-tetrahydrofolate binding site.

It belongs to the Fmt family.

The catalysed reaction is L-methionyl-tRNA(fMet) + (6R)-10-formyltetrahydrofolate = N-formyl-L-methionyl-tRNA(fMet) + (6S)-5,6,7,8-tetrahydrofolate + H(+). Attaches a formyl group to the free amino group of methionyl-tRNA(fMet). The formyl group appears to play a dual role in the initiator identity of N-formylmethionyl-tRNA by promoting its recognition by IF2 and preventing the misappropriation of this tRNA by the elongation apparatus. This Escherichia coli O127:H6 (strain E2348/69 / EPEC) protein is Methionyl-tRNA formyltransferase.